Reading from the N-terminus, the 470-residue chain is Beta-Ala-Xaa dipeptidase (470 aa).

Histidine 87 contacts Zn(2+). Residue aspartate 89 is part of the active site. Aspartate 119 serves as a coordination point for Zn(2+). Glutamate 153 (proton acceptor) is an active-site residue. Zn(2+) contacts are provided by glutamate 154 and aspartate 177. Arginine 350 lines the substrate pocket. Position 439 (histidine 439) interacts with Zn(2+).

This sequence belongs to the peptidase M20A family. Zn(2+) serves as cofactor.

Its subcellular location is the cytoplasm. Fully inhibited by 1,10-phenanthroline or EDTA. Its function is as follows. Is a relatively unspecific dipeptidase cleaving a variety of dipeptides, notably those with an N-terminal beta-Ala or D-Ala residue, e.g. carnosine (beta-Ala-His). To a lesser extent, also shows aminopeptidase activity, since it is able to catalyze the removal of the N-terminal amino acid from a few distinct tripeptides. This is Beta-Ala-Xaa dipeptidase (pepV) from Lactobacillus delbrueckii subsp. lactis.